The sequence spans 303 residues: Aspartate carbamoyltransferase catalytic subunit (303 aa).

Residues R51 and T52 each contribute to the carbamoyl phosphate site. K80 is an L-aspartate binding site. R101, H129, and Q132 together coordinate carbamoyl phosphate. Residues R162 and R221 each contribute to the L-aspartate site. Carbamoyl phosphate is bound by residues L260 and P261.

The protein belongs to the aspartate/ornithine carbamoyltransferase superfamily. ATCase family. In terms of assembly, heterooligomer of catalytic and regulatory chains.

The catalysed reaction is carbamoyl phosphate + L-aspartate = N-carbamoyl-L-aspartate + phosphate + H(+). It functions in the pathway pyrimidine metabolism; UMP biosynthesis via de novo pathway; (S)-dihydroorotate from bicarbonate: step 2/3. Catalyzes the condensation of carbamoyl phosphate and aspartate to form carbamoyl aspartate and inorganic phosphate, the committed step in the de novo pyrimidine nucleotide biosynthesis pathway. The sequence is that of Aspartate carbamoyltransferase catalytic subunit from Saccharolobus islandicus (strain Y.N.15.51 / Yellowstone #2) (Sulfolobus islandicus).